Reading from the N-terminus, the 88-residue chain is Apolipoprotein C-I (88 aa).

A signal peptide spans 1–26; the sequence is MRLFIALPVLIVVVAMTLEGPAPAQA.

The protein belongs to the apolipoprotein C1 family. As to expression, adult and fetal liver.

It localises to the secreted. Its function is as follows. Inhibitor of lipoprotein binding to the low density lipoprotein (LDL) receptor, LDL receptor-related protein, and very low density lipoprotein (VLDL) receptor. Associates with high density lipoproteins (HDL) and the triacylglycerol-rich lipoproteins in the plasma and makes up about 10% of the protein of the VLDL and 2% of that of HDL. Appears to interfere directly with fatty acid uptake and is also the major plasma inhibitor of cholesteryl ester transfer protein (CETP). Modulates the interaction of APOE with beta-migrating VLDL and inhibits binding of beta-VLDL to the LDL receptor-related protein. Binds free fatty acids and reduces their intracellular esterification. In Mus musculus (Mouse), this protein is Apolipoprotein C-I (Apoc1).